The sequence spans 151 residues: Deazaflavin-dependent nitroreductase (151 aa).

Coenzyme F420-(gamma-Glu)n contacts are provided by residues 54 to 56, 60 to 65, 76 to 79, 87 to 91, and tyrosine 133; these read RKT, RVNPLY, AASK, and MWYLN.

Belongs to the F420H(2)-dependent quinone reductase family.

Its subcellular location is the cell membrane. It catalyses the reaction oxidized coenzyme F420-(gamma-L-Glu)(n) + a quinol + H(+) = reduced coenzyme F420-(gamma-L-Glu)(n) + a quinone. Functionally, involved in a F420-dependent anti-oxidant mechanism that protects M.tuberculosis against oxidative stress and bactericidal agents. Catalyzes the F420H(2)-dependent two-electron reduction of quinones to dihydroquinones, thereby preventing the formation of cytotoxic semiquinones obtained by the one-electron reduction pathway. In vitro, catalyzes the reduction of both benzoquinone and naphthoquinone analogs; since menaquinone is the sole quinone electron carrier in the respiratory chain in M.tuberculosis, the physiological electron acceptor for Fqr-mediated F420H(2) oxidation is therefore likely to be the endogenous menaquinone found in the membrane fraction of M.tuberculosis. Is able to use F420 species with two and five glutamate residues in its polyglutamate tail. Cannot use NADH or NADPH instead of F420H(2) as the electron donor. In terms of biological role, is involved in the bioreductive activation of bicyclic 4-nitroimidazole prodrugs such as PA-824 and delamanid developed for anti-tuberculosis therapy against both replicating and persistent bacteria. It converts PA-824 into three primary metabolites resulting from reduction of the imidazole ring at C-3; the major one is the corresponding des-nitroimidazole that generates lethal reactive nitrogen species, including nitric oxide (NO), which appears to be responsible for the anaerobic killing activity. Ddn uses the reduced F420 produced by FGD1 to activate PA-824. Delamanid (OPC-67683) is also reduced by Ddn to its des-nitro form. The chain is Deazaflavin-dependent nitroreductase (ddn) from Mycobacterium tuberculosis (strain CDC 1551 / Oshkosh).